Consider the following 263-residue polypeptide: Oxidoreductase UcpA (263 aa).

An NAD(+)-binding site is contributed by Leu10–Asn32. A substrate-binding site is contributed by Ser141. The Proton acceptor role is filled by Tyr155.

The protein belongs to the short-chain dehydrogenases/reductases (SDR) family.

This chain is Oxidoreductase UcpA (ucpA), found in Escherichia coli O157:H7.